Consider the following 1199-residue polypeptide: MDRSEIVARENPVITQRVTNLLQTNAPLLFMPIDIHEVRYGAYTLFMYGSLENGYKAEVRIENIPVFFDVQIESSNTNQLFLKSLLTAENITYERLETLTQRPVMGYREKEKEFAPYIRIFFKSLYERRKAITYLNNMGYNTAADDTTCYYRMVSRELKLPLTSWIQLQHYSYEPHGLVHRFSVTPEDLVSYQDDGPTDHSIVMAYDIETYSPVKGTVPDPNQANDVVFMICMRIFWIHSTEPLASTCITMAPCKKSSEWTTILCSSEKNLLLSFAEQFSRWAPDICTGFNDSRYDWPFIVEKSMQHGILEEIFNKMSLFWHQKLDTILKCYYVKEKRVKISAEKSIISSFLHTPGCLPIDVRNMCMQLYPKAEKTSLKAFLENCGLDSKVDLPYHLMWKYYETRDSEKMADVAYYCIIDAQRCQDLLVRHNVIPDRREVGILSYTSLYDCIYYAGGHKVCNMLIAYAIHDEYGRIACSTIARGKREHGKYPGAFVIDPVKGLEQDKPTTGLDFASLYPSLIMAYNFSPEKFVASREEANSLMAKGESLHYVSFHFNNRLVEGWFVRHNNVPDKMGLYPKVLIDLLNKRTALKQELKKLGEKKECIHESHPGFKELQFRHAMVDAKQKALKIFMNTFYGEAGNNLSPFFLLPLAGGVTSSGQYNLKLVYNFVINKGYGIKYGDTDSLYITCPDSLYTEVTDAYLNSQKTIKHYEQLCHEKVLLSMKAMSTLCAEVNEYLRRDNGTSYLRMAYEEVLFPVCFTGKKKYYGIAHVNTPNFNTKELFIRGIDIIKQGQTKLTKTIGTRIMEESMKLRRPEDHRPPLIEIVKTVLKDAVVNMKQWNFEDFIQTDAWRPDKDNKAVQIFMSRMHARREQLKKHGAAASQFAEPEPGERFSYVIVEKQVQFDIQGHRTDSSRKGDKMEYVSEAKAKNLPIDILFYINNYVLGLCARFINENEEFQPPDNVSNKDEYAQRRAKSYLQKFVQSIHPKDKSVIKQGIVHRQCYKYVHQEIKKKIGIFADLYKEFFNNTTNPIESFIQSTQFMIQYFDGEQKVNHSMKKMVEQHATSAGNSAGNPAGNALMRAIFTQLITEEKKIVQALYNKGDAIHDLLTYIINNINYKIATFQTKQMLTFEFSSTHVELLLKLNKTWLILAGIHVAKKHLQALLDSYNNEPPSRTFIQQAIEEECGSIKPSCYDFIS.

Belongs to the DNA polymerase type-B family.

The enzyme catalyses DNA(n) + a 2'-deoxyribonucleoside 5'-triphosphate = DNA(n+1) + diphosphate. Its function is as follows. DNA-directed DNA polymerase involved in viral DNA replication. The protein is DNA polymerase beta of Ornithodoros (relapsing fever ticks).